The sequence spans 843 residues: Protein PLASTID MOVEMENT IMPAIRED 1 (843 aa).

A compositionally biased stretch (polar residues) spans 30 to 58 (PQVSVGNRRTNSLALPRSSVPSLVTSADE). Disordered stretches follow at residues 30-65 (PQVSVGNRRTNSLALPRSSVPSLVTSADEVSTARAE) and 88-116 (LEVEEEENVTQSNRIVKKPEESSSGSGVK). Residues 131–284 (LVRIGMQKLS…ELALKLGFQI (154 aa)) form the C2 NT-type domain. Disordered regions lie at residues 300–412 (FGMK…GTIG) and 450–472 (MMKDESDGGDGETESQRLDEEEQ). The segment covering 307–336 (KPKNFANSFGRKQSKTSFSVPSPKMTSRSE) has biased composition (polar residues). Phosphoserine is present on residues serine 314 and serine 328. The segment covering 365-381 (PEEKPVQKNDKPEQRAE) has biased composition (basic and acidic residues). At threonine 404 the chain carries Phosphothreonine. Serine 407 is modified (phosphoserine). The residue at position 410 (threonine 410) is a Phosphothreonine. Over residues 456 to 472 (DGGDGETESQRLDEEEQ) the composition is skewed to acidic residues. Serine 507 is modified (phosphoserine).

As to expression, expressed in leaves, stems, cauline leaves, and flowers but not in roots. Present in leaves in both mesophyll and pavement cells.

The protein resides in the cytoplasm. Functionally, necessary for chloroplast and nuclear photorelocation movements via the regulation of chloroplast-actin (cp-actin) filaments in mesophyll cells, and together with PMIR1, in pavement cells. Required component for both the low- and high-light-dependent chloroplast movement responses via an abscisic acid (ABA) pathway. Involved in the ABA response pathway during seed germination. Modulates ABA accumulation during periods of water deficit at the seedling stage. The protein is Protein PLASTID MOVEMENT IMPAIRED 1 of Arabidopsis thaliana (Mouse-ear cress).